Here is a 666-residue protein sequence, read N- to C-terminus: Transcriptional regulator MIT1 (666 aa).

The span at 90 to 104 (GSNANATSSGSTDSA) shows a compositional bias: low complexity. 5 disordered regions span residues 90–157 (GSNA…SNRS), 232–254 (VKNN…NSST), 314–389 (PPYI…FHNA), 425–479 (YTTQ…AENV), and 528–552 (AQEN…GTML). Polar residues-rich tracts occupy residues 108 to 121 (DGTS…SSSK) and 139 to 157 (GHSS…SNRS). The residue at position 152 (Ser152) is a Phosphoserine. The span at 233–254 (KNNSTTTGNGPNNINNKSNSST) shows a compositional bias: low complexity. The span at 314–333 (PPYITQSPDNTNATGMNTHV) shows a compositional bias: polar residues. Residues 334–384 (NNNNNNSNNSSNSNNSNNNNNNNNNNNNNNNNNINNINNVNTNAGNGNNPN) are compositionally biased toward low complexity. Residues 436-451 (ASTNENQGYSTSSTQH) show a composition bias toward polar residues. Positions 460-476 (SQSASAAAGATGTPGTA) are enriched in low complexity. A compositionally biased stretch (polar residues) spans 530–552 (ENTTSNTNAEPSGATSTNSGTML).

This sequence belongs to the MIT1/WOR1 family.

It localises to the cytoplasm. Its subcellular location is the nucleus. Its function is as follows. Transcriptional regulator of pseudohyphal growth. This is Transcriptional regulator MIT1 (MIT1) from Saccharomyces cerevisiae (strain ATCC 204508 / S288c) (Baker's yeast).